The chain runs to 214 residues: Ras-like protein 2 (214 aa).

Residues 19–24 (GVGKSC), 35–41 (VDEYDPT), 65–66 (AG), 122–125 (NKCD), and 152–154 (SAK) contribute to the GTP site. The Effector region signature appears at 38-46 (YDPTIEDSY). The disordered stretch occupies residues 178 to 197 (QGYSTGSGGSNAGGPSNKME). At cysteine 211 the chain carries Cysteine methyl ester. Cysteine 211 is lipidated: S-farnesyl cysteine. Residues 212–214 (VLM) constitute a propeptide, removed in mature form.

It belongs to the small GTPase superfamily. Ras family. In terms of assembly, interacts with farnesyltransferase beta subunit RAM1.

It is found in the cell membrane. With respect to regulation, alternates between an inactive form bound to GDP and an active form bound to GTP. Activated by a guanine nucleotide-exchange factor (GEF) and inactivated by a GTPase-activating protein (GAP). Its function is as follows. Modulates the activity of the adenylate cyclase catalytic subunit and therefore affects the biosynthesis of cyclic-AMP. Plays a role in both surface attachment and surface recognition of appressoria, a highly specialized infection structure for plant penetration. Regulates appressorium formation by coordinated regulation of cAMP signaling and Pmk1 MAPK pathways. This is Ras-like protein 2 from Pyricularia oryzae (strain 70-15 / ATCC MYA-4617 / FGSC 8958) (Rice blast fungus).